The following is a 403-amino-acid chain: Tryptophan synthase beta chain (403 aa).

At Lys90 the chain carries N6-(pyridoxal phosphate)lysine.

The protein belongs to the TrpB family. As to quaternary structure, tetramer of two alpha and two beta chains. Requires pyridoxal 5'-phosphate as cofactor.

It carries out the reaction (1S,2R)-1-C-(indol-3-yl)glycerol 3-phosphate + L-serine = D-glyceraldehyde 3-phosphate + L-tryptophan + H2O. It participates in amino-acid biosynthesis; L-tryptophan biosynthesis; L-tryptophan from chorismate: step 5/5. In terms of biological role, the beta subunit is responsible for the synthesis of L-tryptophan from indole and L-serine. The chain is Tryptophan synthase beta chain from Leifsonia xyli subsp. xyli (strain CTCB07).